The primary structure comprises 250 residues: Bacteriorhodopsin (250 aa).

Over 1–18 the chain is Extracellular; sequence MCCAALAPPMAATVGPES. The helical transmembrane segment at 19 to 37 threads the bilayer; it reads IWLWIGTIGMTLGTLYFVG. Residues 38-51 are Cytoplasmic-facing; the sequence is RGRGVRDRKMQEFY. A helical membrane pass occupies residues 52 to 70; the sequence is IITIFITTIAAAMYFAMAT. Residues 71-86 are Extracellular-facing; sequence GFGVTEVMVGDEALTI. Residues 87–104 traverse the membrane as a helical segment; the sequence is YWARYADWLFTTPLLLLD. The Cytoplasmic segment spans residues 105-115; sequence LSLLAGANRNT. The helical transmembrane segment at 116 to 135 threads the bilayer; sequence IATLIGLDVFMIGTGAIAAL. The Extracellular segment spans residues 136-142; the sequence is SSTPGTR. A helical membrane pass occupies residues 143–162; it reads IAWWAISTGALLALLYVLVG. Over 163 to 180 the chain is Cytoplasmic; it reads TLSENARNRAPEVASLFG. Residues 181–199 traverse the membrane as a helical segment; the sequence is RLRNLVIALWFLYPVVWIL. Residues 200 to 212 are Extracellular-facing; the sequence is GTEGTFGILPLYW. The helical transmembrane segment at 213-232 threads the bilayer; it reads ETAAFMVLDLSAKVGFGVIL. K225 is subject to N6-(retinylidene)lysine. Residues 233–250 lie on the Cytoplasmic side of the membrane; the sequence is LQSRSVLERVATPTAAPT.

The protein belongs to the archaeal/bacterial/fungal opsin family.

It is found in the cell membrane. In terms of biological role, light-driven proton pump. This Haloterrigena sp. (strain arg-4) protein is Bacteriorhodopsin (bop).